The primary structure comprises 451 residues: Enolase (451 aa).

Gln-167 contributes to the (2R)-2-phosphoglycerate binding site. Catalysis depends on Glu-209, which acts as the Proton donor. 3 residues coordinate Mg(2+): Asp-250, Glu-307, and Asp-334. 4 residues coordinate (2R)-2-phosphoglycerate: Lys-359, Arg-388, Ser-389, and Lys-410. Lys-359 (proton acceptor) is an active-site residue.

The protein belongs to the enolase family. The cofactor is Mg(2+).

The protein localises to the cytoplasm. The protein resides in the secreted. It localises to the cell surface. It catalyses the reaction (2R)-2-phosphoglycerate = phosphoenolpyruvate + H2O. It participates in carbohydrate degradation; glycolysis; pyruvate from D-glyceraldehyde 3-phosphate: step 4/5. Catalyzes the reversible conversion of 2-phosphoglycerate (2-PG) into phosphoenolpyruvate (PEP). It is essential for the degradation of carbohydrates via glycolysis. The sequence is that of Enolase from Mesomycoplasma hyopneumoniae (strain J / ATCC 25934 / NCTC 10110) (Mycoplasma hyopneumoniae).